We begin with the raw amino-acid sequence, 322 residues long: Uracil-DNA glycosylase (322 aa).

The active-site Proton acceptor is the D142.

This sequence belongs to the uracil-DNA glycosylase (UDG) superfamily. UNG family.

The protein localises to the mitochondrion. The protein resides in the nucleus. The enzyme catalyses Hydrolyzes single-stranded DNA or mismatched double-stranded DNA and polynucleotides, releasing free uracil.. Functionally, excises uracil residues from the DNA which can arise as a result of misincorporation of dUMP residues by DNA polymerase or due to deamination of cytosine. The protein is Uracil-DNA glycosylase (ung1) of Schizosaccharomyces pombe (strain 972 / ATCC 24843) (Fission yeast).